Here is a 679-residue protein sequence, read N- to C-terminus: Pollen receptor-like kinase 4 (679 aa).

Residues 1 to 39 (MLTWETPVMLASNTASTKKLAFITTFLIIVLCPVTMVMS) form the signal peptide. LRR repeat units lie at residues 118 to 141 (IKNL…VKNF), 142 to 165 (GALK…AFDG), 167 to 191 (HHLK…AYLP), 193 to 217 (LLEL…DLKL), and 234 to 257 (SNMD…PCSS). Residues 252–269 (LSPCSSDSGSSPDLPSSP) are compositionally biased toward low complexity. The interval 252–271 (LSPCSSDSGSSPDLPSSPTE) is disordered. Residues 278 to 298 (FFIIAIVLIVIGIILMIISLV) form a helical membrane-spanning segment. Positions 311–344 (SAYPSAGQDRTEKYNYDQSTDKDKAADSVTSYTS) are disordered. A compositionally biased stretch (basic and acidic residues) spans 319–336 (DRTEKYNYDQSTDKDKAA). The Protein kinase domain maps to 372–646 (RASAEVLGSG…RDAVEKIERL (275 aa)). Residue Ser374 is modified to Phosphoserine. Residues 378-386 (LGSGSFGSS) and Lys400 contribute to the ATP site. A phosphoserine mark is found at Ser452 and Ser455. Phosphothreonine is present on Thr472. Tyr542 carries the phosphotyrosine modification.

Belongs to the protein kinase superfamily. Ser/Thr protein kinase family. As to quaternary structure, interacts in vitro with ROPGEF1 (via PRONE domain). Interacts weakly with the GRI peptide. In terms of tissue distribution, expressed in pollen and/or in flowers, but not in leaves.

It is found in the membrane. It carries out the reaction L-seryl-[protein] + ATP = O-phospho-L-seryl-[protein] + ADP + H(+). The enzyme catalyses L-threonyl-[protein] + ATP = O-phospho-L-threonyl-[protein] + ADP + H(+). Receptor-like kinase involved in the control of pollen germination and pollen tube polar growth. Can phosphorylate ROPGEF1 in vitro. This is Pollen receptor-like kinase 4 from Arabidopsis thaliana (Mouse-ear cress).